Here is a 968-residue protein sequence, read N- to C-terminus: MPFTLGQRWISDTESELGLGTVVAVDARTVTLLFPSTGENRLYARSDSPVTRVMFNPGDTITSHDGWQMQVEEVKEENGLLTYIGTRLDTEESGVALREVFLDSKLVFSKPQDRLFAGQIDRMDRFALRYRARKYSSEQFRMPYSGLRGQRTSLIPHQLNIAHDVGRRHAPRVLLADEVGLGKTIEAGMILHQQLLSGAAERVLIIVPETLQHQWLVEMLRRFNLRFALFDDERYAEAQHDAYNPFDTEQLVICSLDFARRSKQRLEHLCEAEWDLLVVDEAHHLVWSEDAPSREYQAIEQLAEHVPGVLLLTATPEQLGMESHFARLRLLDPNRFHDFAQFVEEQKNYRPVADAVAMLLAGNKLSNDELNMLGEMIGEQDIEPLLQAANSDSEDAQSARQELVSMLMDRHGTSRVLFRNTRNGVKGFPKRELHTIKLPLPTQYQTAIKVSGIMGARKSAEDRARDMLYPERIYQEFEGDNATWWNFDPRVEWLMGYLTSHRSQKVLVICAKAATALQLEQVLREREGIRAAVFHEGMSIIERDRAAAWFAEEDTGAQVLLCSEIGSEGRNFQFASHMVMFDLPFNPDLLEQRIGRLDRIGQAHDIQIHVPYLEKTAQSVLVRWYHEGLDAFEHTCPTGRTIYDSVYNDLINYLASPDETEGFDDLIKNCREQHEALKAQLEQGRDRLLEIHSNGGEKAQALAESIEEQDDDTNLIAFAMNLFDIIGINQDDRGDNMIVLTPSDHMLVPDFPGLSEDGITITFDREVALAREDAQFITWEHPLIRNGLDLILSGDTGSSTISLLKNKALPVGTLLVELIYVVEAQAPKQLQLNRFLPPTPVRMLLDKNGNNLAAQVEFETFNRQLNAVNRHTGSKLVNAVQQDVHAILQLGEAQIEKSARALIDAARNEADEKLSAELSRLEALRAVNPNIRDDELTAIESNRQQVMESLDQAGWRLDALRLIVVTHQ.

A Helicase ATP-binding domain is found at 164–334 (DVGRRHAPRV…FARLRLLDPN (171 aa)). 177-184 (DEVGLGKT) contacts ATP. Positions 280–283 (DEAH) match the DEAH box motif. The Helicase C-terminal domain maps to 490 to 662 (RVEWLMGYLT…YLASPDETEG (173 aa)).

The protein belongs to the SNF2/RAD54 helicase family. RapA subfamily. As to quaternary structure, interacts with the RNAP. Has a higher affinity for the core RNAP than for the holoenzyme. Its ATPase activity is stimulated by binding to RNAP.

Its function is as follows. Transcription regulator that activates transcription by stimulating RNA polymerase (RNAP) recycling in case of stress conditions such as supercoiled DNA or high salt concentrations. Probably acts by releasing the RNAP, when it is trapped or immobilized on tightly supercoiled DNA. Does not activate transcription on linear DNA. Probably not involved in DNA repair. This is RNA polymerase-associated protein RapA from Escherichia coli O127:H6 (strain E2348/69 / EPEC).